Consider the following 373-residue polypeptide: 3 beta-hydroxysteroid dehydrogenase/Delta 5--&gt;4-isomerase type 1 (373 aa).

NADP(+) contacts are provided by residues 10–15, tyrosine 155, and lysine 159; that span reads GAGGFV. The active-site Proton donor is the lysine 159. Residues 288–308 form a helical membrane-spanning segment; the sequence is LPLLYWLAFLLETVSFLLRPF.

Belongs to the 3-beta-HSD family. In terms of tissue distribution, adrenal glands, kidney, testes and ovaries.

Its subcellular location is the endoplasmic reticulum membrane. The protein resides in the mitochondrion membrane. The enzyme catalyses a 3beta-hydroxy-Delta(5)-steroid + NAD(+) = a 3-oxo-Delta(5)-steroid + NADH + H(+). The catalysed reaction is pregnenolone + NAD(+) = pregn-5-ene-3,20-dione + NADH + H(+). It carries out the reaction 3beta-hydroxyandrost-5-en-17-one + NAD(+) = androst-5-ene-3,17-dione + NADH + H(+). It catalyses the reaction androst-5-en-3beta,17beta-diol + NAD(+) = 17beta-hydroxy-androst-5-en-3-one + NADH + H(+). The enzyme catalyses a 3beta-hydroxysteroid + NADP(+) = a 3-oxosteroid + NADPH + H(+). The catalysed reaction is 5alpha-androstane-3beta,17beta-diol + NADP(+) = 17beta-hydroxy-5alpha-androstan-3-one + NADPH + H(+). It carries out the reaction 3beta-hydroxy-5alpha-androstan-17-one + NADP(+) = 5alpha-androstan-3,17-dione + NADPH + H(+). It catalyses the reaction a 3-oxo-Delta(5)-steroid = a 3-oxo-Delta(4)-steroid. The enzyme catalyses pregn-5-ene-3,20-dione = progesterone. The catalysed reaction is androst-5-ene-3,17-dione = androst-4-ene-3,17-dione. It carries out the reaction 17beta-hydroxy-androst-5-en-3-one = testosterone. It catalyses the reaction 5alpha-androstane-3beta,17beta-diol + NAD(+) = 17beta-hydroxy-5alpha-androstan-3-one + NADH + H(+). The protein operates within steroid hormone biosynthesis. It participates in steroid metabolism. Its function is as follows. A bifunctional enzyme responsible for the oxidation and isomerization of 3beta-hydroxy-Delta(5)-steroid precursors to 3-oxo-Delta(4)-steroids, an essential step in steroid hormone biosynthesis. Specifically catalyzes the conversion of pregnenolone to progesterone, dehydroepiandrosterone (DHEA) to 4-androstenedione, and androstenediol to testosterone. Additionally, catalyzes the interconversion between 3beta-hydroxy and 3-oxo-5alpha-androstane steroids controlling the bioavalability of the active forms. Specifically converts dihydrotestosterone to its inactive form 5alpha-androstanediol, that does not bind androgen receptor/AR. Also converts androstanedione, a precursor of testosterone and estrone, to epiandrosterone. Expected to use NAD(+) as preferred electron donor for the 3beta-hydroxy-steroid dehydrogenase activity and NADPH for the 3-ketosteroid reductase activity. This is 3 beta-hydroxysteroid dehydrogenase/Delta 5--&gt;4-isomerase type 1 from Rattus norvegicus (Rat).